Reading from the N-terminus, the 635-residue chain is Threonine--tRNA ligase (635 aa).

The tract at residues Met-1–Arg-144 is editing domain. The tract at residues Pro-215–Pro-514 is catalytic. 3 residues coordinate Zn(2+): Cys-307, His-359, and His-483.

This sequence belongs to the class-II aminoacyl-tRNA synthetase family. Homodimer. It depends on Zn(2+) as a cofactor.

It localises to the cytoplasm. The enzyme catalyses tRNA(Thr) + L-threonine + ATP = L-threonyl-tRNA(Thr) + AMP + diphosphate + H(+). Functionally, catalyzes the attachment of threonine to tRNA(Thr) in a two-step reaction: L-threonine is first activated by ATP to form Thr-AMP and then transferred to the acceptor end of tRNA(Thr). Also edits incorrectly charged L-seryl-tRNA(Thr). In Methanosarcina barkeri (strain Fusaro / DSM 804), this protein is Threonine--tRNA ligase.